Reading from the N-terminus, the 122-residue chain is MIQTKSRLDVADNTGAKSVLCIKVLGGSKRRYASVGDIIKVSIKEAAPRGRVKKGEVYSAVVVRTAKGIRRGDGSLVKFDGNAAVLLNAKLEPIGTRIFGPVTRELRTERFMKIVSLAPEVL.

Belongs to the universal ribosomal protein uL14 family. Part of the 50S ribosomal subunit. Forms a cluster with proteins L3 and L19. In the 70S ribosome, L14 and L19 interact and together make contacts with the 16S rRNA in bridges B5 and B8.

In terms of biological role, binds to 23S rRNA. Forms part of two intersubunit bridges in the 70S ribosome. The protein is Large ribosomal subunit protein uL14 of Paracidovorax citrulli (strain AAC00-1) (Acidovorax citrulli).